The following is a 265-amino-acid chain: Phosphatidylserine decarboxylase proenzyme (265 aa).

Serine 183 acts as the Schiff-base intermediate with substrate; via pyruvic acid in catalysis. Pyruvic acid (Ser); by autocatalysis is present on serine 183. The tract at residues 216 to 246 (TAPQTESEPESEPALQTAPVETAANPSAEQR) is disordered.

This sequence belongs to the phosphatidylserine decarboxylase family. PSD-A subfamily. Heterodimer of a large membrane-associated beta subunit and a small pyruvoyl-containing alpha subunit. The cofactor is pyruvate. Post-translationally, is synthesized initially as an inactive proenzyme. Formation of the active enzyme involves a self-maturation process in which the active site pyruvoyl group is generated from an internal serine residue via an autocatalytic post-translational modification. Two non-identical subunits are generated from the proenzyme in this reaction, and the pyruvate is formed at the N-terminus of the alpha chain, which is derived from the carboxyl end of the proenzyme. The post-translation cleavage follows an unusual pathway, termed non-hydrolytic serinolysis, in which the side chain hydroxyl group of the serine supplies its oxygen atom to form the C-terminus of the beta chain, while the remainder of the serine residue undergoes an oxidative deamination to produce ammonia and the pyruvoyl prosthetic group on the alpha chain.

It is found in the cell membrane. It carries out the reaction a 1,2-diacyl-sn-glycero-3-phospho-L-serine + H(+) = a 1,2-diacyl-sn-glycero-3-phosphoethanolamine + CO2. Its pathway is phospholipid metabolism; phosphatidylethanolamine biosynthesis; phosphatidylethanolamine from CDP-diacylglycerol: step 2/2. In terms of biological role, catalyzes the formation of phosphatidylethanolamine (PtdEtn) from phosphatidylserine (PtdSer). The protein is Phosphatidylserine decarboxylase proenzyme of Neisseria meningitidis serogroup B (strain ATCC BAA-335 / MC58).